Consider the following 352-residue polypeptide: Rhodopsin (352 aa).

Topologically, residues 1–36 (MNGTEGPFFYIPMVNTTGVVRSPYEYPQYYLVNPAA) are extracellular. Residues Asn2 and Asn15 are each glycosylated (N-linked (GlcNAc...) asparagine). The helical transmembrane segment at 37–61 (YACLGAYMFFLILVGFPVNFLTLYV) threads the bilayer. The Cytoplasmic segment spans residues 62–73 (TLEHKKLRTPLN). The helical transmembrane segment at 74-96 (YILLNLAVADLFMVFGGFTTTIY) threads the bilayer. The Extracellular portion of the chain corresponds to 97 to 110 (TSMHGYFVLGRLGC). A disulfide bridge links Cys110 with Cys187. Residues 111–133 (NIEGFFATLGGEIALWSLVVLAI) traverse the membrane as a helical segment. Residues 134–136 (ERW) carry the 'Ionic lock' involved in activated form stabilization motif. The Cytoplasmic segment spans residues 134–152 (ERWVVVCKPISNFRFGENH). Residues 153-173 (AIMGVAFTWFMASACAVPPLV) traverse the membrane as a helical segment. The Extracellular portion of the chain corresponds to 174-202 (GWSRYIPEGMQCSCGIDYYTRAEGFNNES). A glycan (N-linked (GlcNAc...) asparagine) is linked at Asn200. The chain crosses the membrane as a helical span at residues 203–224 (FVIYMFTVHFCIPLAVVGFCYG). Residues 225–252 (RLLCAVKEAAAAQQESETTQRAEREVSR) are Cytoplasmic-facing. Residues 253–274 (MVVIMVIGFLVCWLPYASVAWY) form a helical membrane-spanning segment. The Extracellular segment spans residues 275–286 (IFTHQGSEFGPL). A helical transmembrane segment spans residues 287 to 308 (FMTIPAFFAKSSSIYNPMIYIC). Position 296 is an N6-(retinylidene)lysine (Lys296). The Cytoplasmic portion of the chain corresponds to 309-352 (MNKQFRHCMITTLCCGKNPFEEEEGASTTKTEASSVSSSSVSPA). Residues Cys322 and Cys323 are each lipidated (S-palmitoyl cysteine). The interval 331 to 352 (EEGASTTKTEASSVSSSSVSPA) is disordered. A compositionally biased stretch (low complexity) spans 342–352 (SSVSSSSVSPA).

Belongs to the G-protein coupled receptor 1 family. Opsin subfamily. Post-translationally, phosphorylated on some or all of the serine and threonine residues present in the C-terminal region. In terms of processing, contains one covalently linked retinal chromophore.

The protein resides in the membrane. The protein localises to the cell projection. Its subcellular location is the cilium. It is found in the photoreceptor outer segment. Its function is as follows. Photoreceptor required for image-forming vision at low light intensity. While most salt water fish species use retinal as chromophore, most freshwater fish use 3-dehydroretinal, or a mixture of retinal and 3-dehydroretinal. Light-induced isomerization of 11-cis to all-trans retinal triggers a conformational change that activates signaling via G-proteins. Subsequent receptor phosphorylation mediates displacement of the bound G-protein alpha subunit by arrestin and terminates signaling. The chain is Rhodopsin (rho) from Gobius niger (Black goby).